The following is a 193-amino-acid chain: Holliday junction branch migration complex subunit RuvA (193 aa).

The segment at 1 to 64 (MIGRIAGILL…EDAHLLYGFL (64 aa)) is domain I. The domain II stretch occupies residues 65–139 (TPQERTTFRE…GKLGADLGAL (75 aa)). The interval 139–143 (LAGAA) is flexible linker. Positions 144–193 (SASDHATDILNALLALGYSEKEGLAAIKNVPAGTGVSEGIKLALKALSKA) are domain III.

It belongs to the RuvA family. In terms of assembly, homotetramer. Forms an RuvA(8)-RuvB(12)-Holliday junction (HJ) complex. HJ DNA is sandwiched between 2 RuvA tetramers; dsDNA enters through RuvA and exits via RuvB. An RuvB hexamer assembles on each DNA strand where it exits the tetramer. Each RuvB hexamer is contacted by two RuvA subunits (via domain III) on 2 adjacent RuvB subunits; this complex drives branch migration. In the full resolvosome a probable DNA-RuvA(4)-RuvB(12)-RuvC(2) complex forms which resolves the HJ.

Its subcellular location is the cytoplasm. In terms of biological role, the RuvA-RuvB-RuvC complex processes Holliday junction (HJ) DNA during genetic recombination and DNA repair, while the RuvA-RuvB complex plays an important role in the rescue of blocked DNA replication forks via replication fork reversal (RFR). RuvA specifically binds to HJ cruciform DNA, conferring on it an open structure. The RuvB hexamer acts as an ATP-dependent pump, pulling dsDNA into and through the RuvAB complex. HJ branch migration allows RuvC to scan DNA until it finds its consensus sequence, where it cleaves and resolves the cruciform DNA. The polypeptide is Holliday junction branch migration complex subunit RuvA (Burkholderia cenocepacia (strain HI2424)).